A 485-amino-acid polypeptide reads, in one-letter code: T-complex protein 1 subunit theta (485 aa).

It belongs to the TCP-1 chaperonin family. Component of the T-complex protein 1 (TCP1) complex.

It is found in the cytoplasm. Molecular chaperone; assists the folding of proteins upon ATP hydrolysis. The chain is T-complex protein 1 subunit theta (CCT8) from Encephalitozoon cuniculi (strain GB-M1) (Microsporidian parasite).